We begin with the raw amino-acid sequence, 1101 residues long: Type II inositol polyphosphate 5-phosphatase 15 (1101 aa).

Low complexity predominate over residues 31 to 40 (RSAYSSSSSS). A disordered region spans residues 31–54 (RSAYSSSSSSGDDESQPSVDDSNK). WD repeat units lie at residues 121-162 (LRET…GSGR), 180-219 (FGSA…GIEE), 225-263 (AHRG…GKSL), 403-432 (DDSR…MRWD), 433-481 (GNGN…GGWV), and 483-519 (HSGP…PLDN). Catalytic stretches follow at residues 749–765 (DMVI…DDIT) and 828–843 (KKRI…YRDN). Residue Lys-907 forms a Glycyl lysine isopeptide (Lys-Gly) (interchain with G-Cter in ubiquitin) linkage.

It belongs to the inositol polyphosphate 5-phosphatase family. Mg(2+) is required as a cofactor. Predominantly expressed in interfascicular fibers and vascular bundles. Expressed in seedlings, stems, roots and flowers. Expressed at lower level in mature leaves.

The enzyme catalyses a 1,2-diacyl-sn-glycero-3-phospho-(1D-myo-inositol-4,5-bisphosphate) + H2O = a 1,2-diacyl-sn-glycero-3-phospho-(1D-myo-inositol 4-phosphate) + phosphate. The catalysed reaction is a 1,2-diacyl-sn-glycero-3-phospho-(1D-myo-inositol-3,4,5-trisphosphate) + H2O = a 1,2-diacyl-sn-glycero-3-phospho-(1D-myo-inositol-3,4-bisphosphate) + phosphate. It catalyses the reaction 1D-myo-inositol 1,4,5-trisphosphate + H2O = 1D-myo-inositol 1,4-bisphosphate + phosphate. Has phosphatase activity toward PtdIns(4,5)P2, PtdIns(3,4,5)P3 and Ins(1,4,5)P3. Has a higher substrate affinity toward PtdIns(4,5)P2. Required for secondary wall synthesis and actin organization in fiber cells. This is Type II inositol polyphosphate 5-phosphatase 15 from Arabidopsis thaliana (Mouse-ear cress).